The chain runs to 78 residues: Translation initiation factor IF-1, plastid (78 aa).

The S1-like domain maps to 1–72 (MKKQDLIDME…TKGRITYRLR (72 aa)).

The protein belongs to the IF-1 family. As to quaternary structure, component of the 30S ribosomal translation pre-initiation complex which assembles on the 30S ribosome in the order IF-2 and IF-3, IF-1 and N-formylmethionyl-tRNA(fMet); mRNA recruitment can occur at any time during PIC assembly.

The protein resides in the plastid. Its function is as follows. One of the essential components for the initiation of protein synthesis. Stabilizes the binding of IF-2 and IF-3 on the 30S subunit to which N-formylmethionyl-tRNA(fMet) subsequently binds. Helps modulate mRNA selection, yielding the 30S pre-initiation complex (PIC). Upon addition of the 50S ribosomal subunit IF-1, IF-2 and IF-3 are released leaving the mature 70S translation initiation complex. This chain is Translation initiation factor IF-1, plastid, found in Aneura mirabilis (Parasitic liverwort).